Consider the following 76-residue polypeptide: Exodeoxyribonuclease 7 small subunit (76 aa).

The protein belongs to the XseB family. As to quaternary structure, heterooligomer composed of large and small subunits.

Its subcellular location is the cytoplasm. It catalyses the reaction Exonucleolytic cleavage in either 5'- to 3'- or 3'- to 5'-direction to yield nucleoside 5'-phosphates.. In terms of biological role, bidirectionally degrades single-stranded DNA into large acid-insoluble oligonucleotides, which are then degraded further into small acid-soluble oligonucleotides. This is Exodeoxyribonuclease 7 small subunit from Geotalea daltonii (strain DSM 22248 / JCM 15807 / FRC-32) (Geobacter daltonii).